Consider the following 235-residue polypeptide: Phosphoribosylformylglycinamidine synthase subunit PurQ (235 aa).

The Glutamine amidotransferase type-1 domain occupies Phe3–Thr234. Residue Cys86 is the Nucleophile of the active site. Catalysis depends on residues His203 and Glu205.

In terms of assembly, part of the FGAM synthase complex composed of 1 PurL, 1 PurQ and 2 PurS subunits.

The protein localises to the cytoplasm. The enzyme catalyses N(2)-formyl-N(1)-(5-phospho-beta-D-ribosyl)glycinamide + L-glutamine + ATP + H2O = 2-formamido-N(1)-(5-O-phospho-beta-D-ribosyl)acetamidine + L-glutamate + ADP + phosphate + H(+). It carries out the reaction L-glutamine + H2O = L-glutamate + NH4(+). The protein operates within purine metabolism; IMP biosynthesis via de novo pathway; 5-amino-1-(5-phospho-D-ribosyl)imidazole from N(2)-formyl-N(1)-(5-phospho-D-ribosyl)glycinamide: step 1/2. In terms of biological role, part of the phosphoribosylformylglycinamidine synthase complex involved in the purines biosynthetic pathway. Catalyzes the ATP-dependent conversion of formylglycinamide ribonucleotide (FGAR) and glutamine to yield formylglycinamidine ribonucleotide (FGAM) and glutamate. The FGAM synthase complex is composed of three subunits. PurQ produces an ammonia molecule by converting glutamine to glutamate. PurL transfers the ammonia molecule to FGAR to form FGAM in an ATP-dependent manner. PurS interacts with PurQ and PurL and is thought to assist in the transfer of the ammonia molecule from PurQ to PurL. This Acaryochloris marina (strain MBIC 11017) protein is Phosphoribosylformylglycinamidine synthase subunit PurQ.